A 363-amino-acid polypeptide reads, in one-letter code: MLACNDDTSLYLLVKQVTKKEIYSNDLENGNVKRGASMQSLYLIGDPKCCRNNSSKQKSIIILCGPTASGKSYLGHELAKAYNGEIINIDSMQVYKEIPIITASPPKSYKTEILYHLYNFLSMTEDFSVIKYLKLATEKIKEITDRGKLPILIGGTGLYINSLVFGYNNIPDISEDLQEQVRNLHVKIGNIELWSKLEKFDPLAASKINQNDTQRLIRAYEVFMQTGKSIFSFQTLPKEQILSDFNFKIIFLNPERKFLYKTCDERLDKIFKEGAIDEIALIKKQFAPKDYTNLKAVGIKEILAYLNGNLTLDEALNAAQIRTRQYAKRQVTWFKNQIQDKITLEYANQEEFTQTLKNPFKII.

Residues 1 to 55 are unknown insert; the sequence is MLACNDDTSLYLLVKQVTKKEIYSNDLENGNVKRGASMQSLYLIGDPKCCRNNSS. 65–72 contacts ATP; that stretch reads GPTASGKS. 67–72 contacts substrate; it reads TASGKS. Interaction with substrate tRNA stretches follow at residues 90–93 and 214–218; these read DSMQ and QRLIR.

It belongs to the IPP transferase family. Monomer. Mg(2+) serves as cofactor.

The enzyme catalyses adenosine(37) in tRNA + dimethylallyl diphosphate = N(6)-dimethylallyladenosine(37) in tRNA + diphosphate. Functionally, catalyzes the transfer of a dimethylallyl group onto the adenine at position 37 in tRNAs that read codons beginning with uridine, leading to the formation of N6-(dimethylallyl)adenosine (i(6)A). The chain is tRNA dimethylallyltransferase from Rickettsia conorii (strain ATCC VR-613 / Malish 7).